The primary structure comprises 180 residues: Guanosine-3',5'-bis(diphosphate) 3'-pyrophosphohydrolase MESH1 (180 aa).

Positions 33–128 constitute an HD domain; that stretch reads YINHPIGVAR…VKLADKLYNL (96 aa). Mn(2+) is bound by residues H36, H62, and D63. Active-site nucleophile residues include E66 and D67. D123 is a binding site for Mn(2+).

It belongs to the MESH1 family. It depends on Mn(2+) as a cofactor.

It carries out the reaction guanosine 3',5'-bis(diphosphate) + H2O = GDP + diphosphate + H(+). PpGpp hydrolyzing enzyme involved in starvation response. The sequence is that of Guanosine-3',5'-bis(diphosphate) 3'-pyrophosphohydrolase MESH1 (hddc3) from Danio rerio (Zebrafish).